Reading from the N-terminus, the 399-residue chain is S-adenosylmethionine synthase (399 aa).

His16 contacts ATP. Asp18 serves as a coordination point for Mg(2+). Glu44 contacts K(+). Residues Glu57 and Gln100 each contribute to the L-methionine site. Positions 100-110 (QSSDIAQGVNE) are flexible loop. ATP contacts are provided by residues 177–179 (DAK), 244–245 (RF), Asp253, 259–260 (RK), Ala276, and Lys280. Asp253 is an L-methionine binding site. Residue Lys284 coordinates L-methionine.

It belongs to the AdoMet synthase family. Homotetramer; dimer of dimers. Mg(2+) serves as cofactor. Requires K(+) as cofactor.

The protein resides in the cytoplasm. It carries out the reaction L-methionine + ATP + H2O = S-adenosyl-L-methionine + phosphate + diphosphate. The protein operates within amino-acid biosynthesis; S-adenosyl-L-methionine biosynthesis; S-adenosyl-L-methionine from L-methionine: step 1/1. Catalyzes the formation of S-adenosylmethionine (AdoMet) from methionine and ATP. The overall synthetic reaction is composed of two sequential steps, AdoMet formation and the subsequent tripolyphosphate hydrolysis which occurs prior to release of AdoMet from the enzyme. The sequence is that of S-adenosylmethionine synthase from Lactococcus lactis subsp. cremoris (strain MG1363).